Reading from the N-terminus, the 190-residue chain is dCTP deaminase, dUMP-forming (190 aa).

DCTP contacts are provided by residues 101–106 (KSSLGR), Asp119, 127–129 (TLE), Gln148, Tyr162, Lys170, and Gln174. Glu129 (proton donor/acceptor) is an active-site residue. The disordered stretch occupies residues 160–190 (HPYGSSRAGSKYQGQRGPTPSRSCQNFIRST). Positions 171–190 (YQGQRGPTPSRSCQNFIRST) are enriched in polar residues.

Belongs to the dCTP deaminase family. As to quaternary structure, homotrimer.

The catalysed reaction is dCTP + 2 H2O = dUMP + NH4(+) + diphosphate. It functions in the pathway pyrimidine metabolism; dUMP biosynthesis; dUMP from dCTP: step 1/1. In terms of biological role, bifunctional enzyme that catalyzes both the deamination of dCTP to dUTP and the hydrolysis of dUTP to dUMP without releasing the toxic dUTP intermediate. The protein is dCTP deaminase, dUMP-forming of Mycobacterium bovis (strain ATCC BAA-935 / AF2122/97).